The following is a 572-amino-acid chain: Sulfite reductase [NADPH] hemoprotein beta-component (572 aa).

C436, C442, C481, and C485 together coordinate [4Fe-4S] cluster. C485 contributes to the siroheme binding site.

Belongs to the nitrite and sulfite reductase 4Fe-4S domain family. As to quaternary structure, alpha(8)-beta(8). The alpha component is a flavoprotein, the beta component is a hemoprotein. Siroheme is required as a cofactor. [4Fe-4S] cluster serves as cofactor.

The enzyme catalyses hydrogen sulfide + 3 NADP(+) + 3 H2O = sulfite + 3 NADPH + 4 H(+). The protein operates within sulfur metabolism; hydrogen sulfide biosynthesis; hydrogen sulfide from sulfite (NADPH route): step 1/1. Component of the sulfite reductase complex that catalyzes the 6-electron reduction of sulfite to sulfide. This is one of several activities required for the biosynthesis of L-cysteine from sulfate. The protein is Sulfite reductase [NADPH] hemoprotein beta-component of Bacillus pumilus (strain SAFR-032).